Here is a 76-residue protein sequence, read N- to C-terminus: Exodeoxyribonuclease 7 small subunit (76 aa).

The protein belongs to the XseB family. Heterooligomer composed of large and small subunits.

The protein localises to the cytoplasm. It carries out the reaction Exonucleolytic cleavage in either 5'- to 3'- or 3'- to 5'-direction to yield nucleoside 5'-phosphates.. Its function is as follows. Bidirectionally degrades single-stranded DNA into large acid-insoluble oligonucleotides, which are then degraded further into small acid-soluble oligonucleotides. This is Exodeoxyribonuclease 7 small subunit from Geotalea uraniireducens (strain Rf4) (Geobacter uraniireducens).